A 273-amino-acid polypeptide reads, in one-letter code: F-actin-capping protein subunit alpha (273 aa).

The protein belongs to the F-actin-capping protein alpha subunit family. As to quaternary structure, heterodimer of an alpha and a beta subunit.

It localises to the cytoplasm. The protein localises to the cytoskeleton. Its function is as follows. F-actin-capping proteins bind in a Ca(2+)-independent manner to the fast growing ends of actin filaments (barbed end) thereby blocking the exchange of subunits at these ends. Unlike other capping proteins (such as gelsolin and severin), these proteins do not sever actin filaments. The chain is F-actin-capping protein subunit alpha (CAP1) from Gibberella zeae (strain ATCC MYA-4620 / CBS 123657 / FGSC 9075 / NRRL 31084 / PH-1) (Wheat head blight fungus).